A 447-amino-acid chain; its full sequence is Sporulation protein YpeB (447 aa).

Belongs to the YpeB family.

Its function is as follows. Required for spore cortex hydrolysis during germination. Appears to be required for either expression, localization, activation or function of SleB. This chain is Sporulation protein YpeB, found in Oceanobacillus iheyensis (strain DSM 14371 / CIP 107618 / JCM 11309 / KCTC 3954 / HTE831).